The following is a 316-amino-acid chain: Secondary metabolism regulator LAE1 (316 aa).

It belongs to the methyltransferase superfamily. LaeA methyltransferase family. In terms of assembly, component of the heterotrimeric velvet complex composed of LAE1, VEL1 and VEL2; VEL1 acting as a bridging protein between LAE1 and VEL2. Interacts with VEL1.

It is found in the nucleus. The catalysed reaction is L-methionyl-[protein] + S-adenosyl-L-methionine = S-methyl-L-methionyl-[protein] + S-adenosyl-L-homocysteine. Its function is as follows. Methyltransferase that performs automethylation. No other methyl-accepting substrate has been identified yet. Component of the velvet transcription factor complex that acts as a global regulator for secondary metabolite gene expression. Controls the expression of the gibberellins gene clusters, but does not affect bikaverin production. Controls the expression of the fusaric acid gene cluster. Acts as a virulence factors during infection, most likely through activation of gibberellins biosynthesis. This chain is Secondary metabolism regulator LAE1, found in Gibberella fujikuroi (strain CBS 195.34 / IMI 58289 / NRRL A-6831) (Bakanae and foot rot disease fungus).